The primary structure comprises 202 residues: Dephospho-CoA kinase (202 aa).

Residues 4 to 202 (FLGLTGGIAT…EGVCHKSGMS (199 aa)) form the DPCK domain. Residue 12–17 (ATGKTT) participates in ATP binding.

Belongs to the CoaE family.

Its subcellular location is the cytoplasm. It catalyses the reaction 3'-dephospho-CoA + ATP = ADP + CoA + H(+). Its pathway is cofactor biosynthesis; coenzyme A biosynthesis; CoA from (R)-pantothenate: step 5/5. In terms of biological role, catalyzes the phosphorylation of the 3'-hydroxyl group of dephosphocoenzyme A to form coenzyme A. The polypeptide is Dephospho-CoA kinase (Latilactobacillus sakei subsp. sakei (strain 23K) (Lactobacillus sakei subsp. sakei)).